The following is a 635-amino-acid chain: Sodium- and chloride-dependent creatine transporter 1 (635 aa).

The span at Met-1–Tyr-11 shows a compositional bias: polar residues. A disordered region spans residues Met-1–Pro-27. Residues Met-1–Asp-60 are Cytoplasmic-facing. A helical transmembrane segment spans residues Phe-61–Leu-81. Residues Cys-82–Gly-87 are Extracellular-facing. The chain crosses the membrane as a helical span at residues Gly-88–Leu-108. Topologically, residues Glu-109 to Met-138 are cytoplasmic. A helical membrane pass occupies residues Val-139–Leu-159. Residues Val-160–Ala-230 are Extracellular-facing. Asn-192 and Asn-197 each carry an N-linked (GlcNAc...) asparagine glycan. A helical transmembrane segment spans residues Leu-231–Trp-251. At Lys-252–Tyr-269 the chain is on the cytoplasmic side. The chain crosses the membrane as a helical span at residues Val-270–Ile-290. Over Tyr-291–Gln-304 the chain is Extracellular. The helical transmembrane segment at Val-305 to Thr-325 threads the bilayer. Residues Ala-326 to Ala-341 are Cytoplasmic-facing. The chain crosses the membrane as a helical span at residues Ile-342–Ile-362. Residues Leu-363–Thr-394 lie on the Extracellular side of the membrane. Residues Leu-395–Leu-415 form a helical membrane-spanning segment. Residues Asp-416–Glu-444 are Cytoplasmic-facing. The chain crosses the membrane as a helical span at residues Ile-445–Gly-465. The Extracellular segment spans residues Gly-466–Ser-479. A helical transmembrane segment spans residues Gly-480–Ala-500. Residues Asp-501–Lys-520 lie on the Cytoplasmic side of the membrane. The helical transmembrane segment at Trp-521–Tyr-541 threads the bilayer. The Extracellular segment spans residues His-542–Val-560. Asn-548 carries an N-linked (GlcNAc...) asparagine glycan. Residues Gly-561–Leu-581 form a helical membrane-spanning segment. Residues Arg-582–Met-635 lie on the Cytoplasmic side of the membrane. Phosphothreonine is present on residues Thr-617 and Thr-620. Phosphoserine is present on Ser-623.

This sequence belongs to the sodium:neurotransmitter symporter (SNF) (TC 2.A.22) family. SLC6A8 subfamily. Post-translationally, glycosylated.

The protein localises to the cell membrane. Its subcellular location is the apical cell membrane. The enzyme catalyses creatine(out) + chloride(out) + 2 Na(+)(out) = creatine(in) + chloride(in) + 2 Na(+)(in). Functionally, creatine:sodium symporter which mediates the uptake of creatine. Plays an important role in supplying creatine to the brain via the blood-brain barrier. The protein is Sodium- and chloride-dependent creatine transporter 1 (SLC6A8) of Bos taurus (Bovine).